A 916-amino-acid polypeptide reads, in one-letter code: Protein translocase subunit SecA (916 aa).

ATP-binding positions include Gln87, 105-109 (GEGKT), and Asp507. Residues Cys900, Cys902, Cys911, and His912 each contribute to the Zn(2+) site.

The protein belongs to the SecA family. In terms of assembly, monomer and homodimer. Part of the essential Sec protein translocation apparatus which comprises SecA, SecYEG and auxiliary proteins SecDF-YajC and YidC. Zn(2+) serves as cofactor.

It is found in the cell inner membrane. The protein resides in the cytoplasm. It carries out the reaction ATP + H2O + cellular proteinSide 1 = ADP + phosphate + cellular proteinSide 2.. Part of the Sec protein translocase complex. Interacts with the SecYEG preprotein conducting channel. Has a central role in coupling the hydrolysis of ATP to the transfer of proteins into and across the cell membrane, serving both as a receptor for the preprotein-SecB complex and as an ATP-driven molecular motor driving the stepwise translocation of polypeptide chains across the membrane. The protein is Protein translocase subunit SecA of Neisseria meningitidis serogroup C (strain 053442).